Consider the following 274-residue polypeptide: NH(3)-dependent NAD(+) synthetase (274 aa).

27–34 (GLSGGIDS) lines the ATP pocket. Residue Asp-33 participates in Mg(2+) binding. Residue Arg-121 participates in deamido-NAD(+) binding. Residue Thr-141 participates in ATP binding. Glu-146 provides a ligand contact to Mg(2+). 2 residues coordinate ATP: Lys-170 and Ser-192.

It belongs to the NAD synthetase family. In terms of assembly, homodimer.

The enzyme catalyses deamido-NAD(+) + NH4(+) + ATP = AMP + diphosphate + NAD(+) + H(+). Its pathway is cofactor biosynthesis; NAD(+) biosynthesis; NAD(+) from deamido-NAD(+) (ammonia route): step 1/1. Its function is as follows. Catalyzes the ATP-dependent amidation of deamido-NAD to form NAD. Uses ammonia as a nitrogen source. In Helicobacter hepaticus (strain ATCC 51449 / 3B1), this protein is NH(3)-dependent NAD(+) synthetase.